The chain runs to 1044 residues: Ras GTPase-activating protein 1 (1044 aa).

The residue at position 1 (M1) is an N-acetylmethionine. The interval 1-160 (MMAAEAGGEE…DEGDSLDGPE (160 aa)) is hydrophobic. The SH2 1 domain occupies 178–269 (WYHGKLDRTI…LKGEKLLYPV (92 aa)). The SH3 domain occupies 276-338 (EDRRRVRAIL…VEDLVEEVGR (63 aa)). One can recognise an SH2 2 domain in the interval 348–438 (WFHGKISKQE…VEGYYLKEPV (91 aa)). Residues 471 to 574 (NIVKKGYLLK…WMKGLQAFCN (104 aa)) form the PH domain. In terms of domain architecture, C2 spans 574–687 (NLRKSSPGTS…QKGHATDEWF (114 aa)). The residue at position 612 (Y612) is a Phosphotyrosine. 2 consecutive repeats follow at residues 646-664 (PDINRFEITLSNKTKKSKD) and 665-683 (PDILFMRCQLSRLQKGHAT). Residues 761–971 (KLESLLLCTL…HRMIMFLDEL (211 aa)) form the Ras-GAP domain. A Phosphoserine modification is found at S828.

As to quaternary structure, interacts with SQSTM1. Interacts with SPSB1; the interaction does not promote degradation. Interacts with CAV2 (tyrosine phosphorylated form). Directly interacts with NCK1. Interacts with PDGFRB (tyrosine phosphorylated). Interacts (via SH2 domain) with the 'Tyr-9' phosphorylated form of PDPK1. Interacts with tyrosine-phosphorylated EPHB4. Phosphorylated by SRC and LCK. The phosphorylation SRC inhibits its ability to stimulate the Ras-GTPase activity, whereas phosphorylation by LCK does not display any effect on stimulation activity.

It localises to the cytoplasm. Its function is as follows. Inhibitory regulator of the Ras-cyclic AMP pathway. Stimulates the GTPase of normal but not oncogenic Ras p21. This Bos taurus (Bovine) protein is Ras GTPase-activating protein 1 (RASA1).